The sequence spans 126 residues: UPF0538 protein C2orf76 homolog (126 aa).

It belongs to the UPF0538 family.

The protein is UPF0538 protein C2orf76 homolog of Bos taurus (Bovine).